The chain runs to 329 residues: Homeobox protein Nkx-3.2 (329 aa).

The interval 107–188 (GLGSPCGGAP…PDPSPPDEDP (82 aa)) is disordered. The span at 110-124 (SPCGGAPGAGAGGEP) shows a compositional bias: gly residues. Over residues 138–160 (ELGRPGDIGERKKQRPLEARAKG) the composition is skewed to basic and acidic residues. Positions 202 to 261 (KKRSRAAFSHAQVFELERRFNHQRYLSGPERADLAASLKLTETQVKIWFQNRRYKTKRRQ) form a DNA-binding region, homeobox.

The protein belongs to the NK-3 homeobox family. In terms of tissue distribution, first expressed in developing facial cartilage in early tailbud embryos, with expression localized to the basihyobranchial, palatoquadrate and possibly Meckel's cartilages. Shortly after, a second area of expression is seen in the musculature of the anterior gut. During late embryogenesis, gut expression extends into hindgut tissues. In adults, expressed at a high level in the kidney, pancreas, spleen and stomach and at a slightly lower level in the intestine, skeletal muscle and tongue. Adult heart, liver and lung show little or no expression.

The protein resides in the nucleus. The protein is Homeobox protein Nkx-3.2 (nkx3-2) of Xenopus laevis (African clawed frog).